The following is a 432-amino-acid chain: Lysosomal acid phosphatase (432 aa).

Residues 1–32 form the signal peptide; that stretch reads MADGSCLGSGPQLGLIALLVVLLFSAVPLAQS. Residues 33 to 384 are Lumenal-facing; that stretch reads RELRFVTLVY…TTSFIMTEET (352 aa). H44 functions as the Nucleophile in the catalytic mechanism. 5 N-linked (GlcNAc...) asparagine glycosylation sites follow: N94, N135, N179, N193, and N269. Disulfide bonds link C161–C373, C214–C313, and C348–C352. The Proton donor role is filled by D290. N325 and N334 each carry an N-linked (GlcNAc...) asparagine glycan. A helical membrane pass occupies residues 385–405; it reads IIGLTIGAIALFIIIVVLMLL. Topologically, residues 406 to 432 are cytoplasmic; that stretch reads SCNEPKDDGYQHVSDEGDDHETKGLAM.

This sequence belongs to the histidine acid phosphatase family. In terms of processing, the membrane-bound form is converted to the soluble form by sequential proteolytic processing. First, the C-terminal cytoplasmic tail is removed. Cleavage by a lysosomal protease releases the soluble form in the lysosome lumen.

The protein localises to the lysosome membrane. It is found in the lysosome lumen. The catalysed reaction is a phosphate monoester + H2O = an alcohol + phosphate. This is Lysosomal acid phosphatase (acp2) from Xenopus laevis (African clawed frog).